The chain runs to 463 residues: Cis-zeatin O-glucosyltransferase 2 (463 aa).

His-21 (proton acceptor) is an active-site residue. 2 residues coordinate an anthocyanidin: His-21 and Asn-91. Asp-127 (charge relay) is an active-site residue. UDP-alpha-D-glucose is bound by residues Ala-339, Gln-341, His-356, Trp-359, Asn-360, Ser-361, Glu-364, Asp-380, and Gln-381.

It belongs to the UDP-glycosyltransferase family. In terms of tissue distribution, highly expressed in root. Expressed at much lower level in kernel. Weakly or not expressed in expressed in stems and leaves.

The catalysed reaction is cis-zeatin + UDP-alpha-D-glucose = O-beta-D-glucosyl-cis-zeatin + UDP + H(+). Functionally, utilizes UDP-glucose as the sugar donor and catalyzes the formation of O-beta-D-glucosyl-cis-zeatin from cis-zeatin. May regulate active versus storage forms of cytokinins and could have an impact on seed growth. The sequence is that of Cis-zeatin O-glucosyltransferase 2 from Zea mays (Maize).